The following is a 484-amino-acid chain: PTS system N-acetylmuramic acid-specific EIIBC component (484 aa).

The 89-residue stretch at 1 to 89 folds into the PTS EIIB type-1 domain; that stretch reads MAKITTSMIQ…NEMMEGEEDN (89 aa). C28 serves as the catalytic Phosphocysteine intermediate; for EIIB activity. A disordered region spans residues 83 to 106; the sequence is MEGEEDNSASTTAESRDLKDVASE. A compositionally biased stretch (basic and acidic residues) spans 96–106; sequence ESRDLKDVASE. One can recognise a PTS EIIC type-1 domain in the interval 124 to 484; it reads SKFATIFTPL…FFGTKNVDLS (361 aa). A run of 10 helical transmembrane segments spans residues 126 to 146, 168 to 188, 194 to 214, 232 to 252, 273 to 293, 312 to 332, 345 to 365, 379 to 399, 404 to 424, and 451 to 471; these read FATI…LLGF, LILY…ILIG, AFGG…LGYN, GIDP…GAGV, TLLI…GVLF, ILAG…FVPV, LFPI…ALYA, GSII…VTLP, FITA…VSYM, and IFAG…AGFL.

It is found in the cell inner membrane. The enzyme catalyses N-acetyl-beta-D-muramate(out) + N(pros)-phospho-L-histidyl-[protein] = N-acetyl-beta-D-muramate 6-phosphate(in) + L-histidyl-[protein]. Functionally, the phosphoenolpyruvate-dependent sugar phosphotransferase system (sugar PTS), a major carbohydrate active transport system, catalyzes the phosphorylation of incoming sugar substrates concomitantly with their translocation across the cell membrane. This system is involved in N-acetylmuramic acid (MurNAc) transport, yielding cytoplasmic MurNAc-6-P. Is also able to take up anhydro-N-acetylmuramic acid (anhMurNAc), but cannot phosphorylate the carbon 6, probably because of the 1,6-anhydro ring. The sequence is that of PTS system N-acetylmuramic acid-specific EIIBC component (murP) from Aliivibrio fischeri (strain ATCC 700601 / ES114) (Vibrio fischeri).